An 868-amino-acid polypeptide reads, in one-letter code: V-set and immunoglobulin domain-containing protein 10-like (868 aa).

A signal peptide spans 1–27; the sequence is MGLSWALLPFLLLAFRAELLALQPALG. Residues 26-52 are compositionally biased toward low complexity; the sequence is LGSQPPSASSSHSMGSSRDFVSNVSSS. Residues 26–82 form a disordered region; it reads LGSQPPSASSSHSMGSSRDFVSNVSSSQHPQPPGSEASAGIPDSNRFPQGLNSSHVP. At 28–763 the chain is on the extracellular side; the sequence is SQPPSASSSH…QAGSDLSPGA (736 aa). N-linked (GlcNAc...) asparagine glycans are attached at residues Asn48, Asn77, and Asn88. Residues 71-80 show a composition bias toward polar residues; sequence RFPQGLNSSH. Disordered regions lie at residues 96-154 and 323-342; these read LSPD…SGSK and WSRD…EPPR. 2 stretches are compositionally biased toward polar residues: residues 99 to 108 and 133 to 143; these read DVTSSETPPS and PASQISVQTPD. Ig-like C2-type domains follow at residues 289–381 and 389–474; these read PQLS…ADVS and PVIR…SVFN. Cys311 and Cys365 are disulfide-bonded. Asn410 is a glycosylation site (N-linked (GlcNAc...) asparagine). An intrachain disulfide couples Cys415 to Cys458. N-linked (GlcNAc...) asparagine glycans are attached at residues Asn474, Asn628, and Asn637. Residues 764 to 784 traverse the membrane as a helical segment; it reads IAGIVLGSLLGLALLAGLLIL. Over 785-868 the chain is Cytoplasmic; sequence CICCLRRYPG…PWTVRAATQV (84 aa).

The protein resides in the membrane. The polypeptide is V-set and immunoglobulin domain-containing protein 10-like (Vsig10l) (Mus musculus (Mouse)).